We begin with the raw amino-acid sequence, 167 residues long: CS6 fimbrial subunit B (167 aa).

The first 21 residues, 1–21 (MLKKIISAIALIAGTSGVVNA), serve as a signal peptide directing secretion.

The protein localises to the fimbrium. The polypeptide is CS6 fimbrial subunit B (cssB) (Escherichia coli).